The following is a 259-amino-acid chain: Glutamate 5-kinase (259 aa).

An ATP-binding site is contributed by lysine 18. Residues serine 54, aspartate 141, and asparagine 153 each contribute to the substrate site. 173 to 174 contacts ATP; sequence SD.

This sequence belongs to the glutamate 5-kinase family.

The protein localises to the cytoplasm. The catalysed reaction is L-glutamate + ATP = L-glutamyl 5-phosphate + ADP. The protein operates within amino-acid biosynthesis; L-proline biosynthesis; L-glutamate 5-semialdehyde from L-glutamate: step 1/2. Functionally, catalyzes the transfer of a phosphate group to glutamate to form L-glutamate 5-phosphate. The sequence is that of Glutamate 5-kinase from Clavibacter michiganensis subsp. michiganensis (strain NCPPB 382).